A 582-amino-acid chain; its full sequence is Semenogelin-2 (582 aa).

An N-terminal signal peptide occupies residues 1–23 (MKSIILFVLSLLLILEKQAAVMG). 5 disordered regions span residues 25 to 65 (KGGS…SSSI), 91 to 157 (HKTT…GISS), 171 to 192 (LSKE…GSQS), 272 to 366 (NLNQ…KDIQ), and 393 to 557 (SNQD…HNTV). Over residues 50–59 (GQKDKQHTES) the composition is skewed to basic and acidic residues. Positions 111–134 (QKGRDHVKPKRHFRLIVIHRKGGQ) are enriched in basic residues. Composition is skewed to polar residues over residues 137 to 157 (HGTQ…GISS) and 174 to 192 (EQAS…GSQS). Residues 293 to 310 (TEERQFNHGEKSVQKDVP) are compositionally biased toward basic and acidic residues. Polar residues predominate over residues 325 to 335 (KSQNQVSIPSQ). Basic and acidic residues-rich tracts occupy residues 336 to 345 (DQEHGHKENK), 353 to 366 (TEER…KDIQ), 396 to 405 (DQEHGHKENK), and 413 to 426 (TEER…KDIQ). Polar residues-rich tracts occupy residues 427–437 (KSVSKGSISIQ) and 445–455 (KSQNQVTIPSQ). A compositionally biased stretch (basic and acidic residues) spans 456-465 (DQEHGHKENK). Composition is skewed to polar residues over residues 487–498 (KDVSQSSLSFQT) and 506–529 (SQIQ…NSGK). Basic and acidic residues predominate over residues 530-546 (SADREQDLLSHEQESRY). Residues 547 to 557 (QQKSSGAHNTV) show a composition bias toward polar residues.

This sequence belongs to the semenogelin family. Interacts with SERPINA5.

The protein resides in the secreted. Functionally, participates in the formation of a gel matrix (sperm coagulum) entrapping the accessory gland secretions and ejaculated spermatozoa. The chain is Semenogelin-2 (SEMG2) from Colobus guereza (Mantled guereza).